Consider the following 174-residue polypeptide: Guided entry of tail-anchored proteins factor 1 (174 aa).

Over 1–8 (MSASETDR) the chain is Lumenal. The chain crosses the membrane as a helical span at residues 9–29 (WAWLLVLCFVFGCNVLRILLP). The Cytoplasmic segment spans residues 30–99 (TLSSFISRVL…VKARTAQLAK (70 aa)). Residues 39–94 (LQKDAEQESQMRAEIQSMKQELSTVNMMDEFARYARLERKINKMTDKLKTHVKART) adopt a coiled-coil conformation. The interaction with GET3/TRC40 stretch occupies residues 39 to 97 (LQKDAEQESQMRAEIQSMKQELSTVNMMDEFARYARLERKINKMTDKLKTHVKARTAQL). A helical membrane pass occupies residues 100 to 120 (IKWFISVAFYVLQAALMISLI). Residues 121-148 (WKYYSVPVAVVPSKWITPLDRLVAFPTR) lie on the Lumenal side of the membrane. A helical transmembrane segment spans residues 149 to 169 (VAGGIGVTCWILVCNKVVAII). Topologically, residues 170–174 (LHPFS) are cytoplasmic.

This sequence belongs to the WRB/GET1 family. Component of the Golgi to ER traffic (GET) complex, which is composed of GET1, CAMLG/GET2 and GET3. Within the complex, GET1 and CAMLG form a heterotetramer which is stabilized by phosphatidylinositol binding and which binds to the GET3 homodimer. Interacts with CAMLG/GET2 (via C-terminus). GET3 shows a higher affinity for CAMLG than for GET1.

It is found in the endoplasmic reticulum membrane. In terms of biological role, required for the post-translational delivery of tail-anchored (TA) proteins to the endoplasmic reticulum. Together with CAMLG/GET2, acts as a membrane receptor for soluble GET3/TRC40, which recognizes and selectively binds the transmembrane domain of TA proteins in the cytosol. Required to ensure correct topology and ER insertion of CAMLG. This Rattus norvegicus (Rat) protein is Guided entry of tail-anchored proteins factor 1.